The chain runs to 189 residues: Auxin-responsive protein IAA6 (189 aa).

Residues 13–17 carry the EAR-like (transcriptional repression) motif; the sequence is LRLGL. Residues 93–178 form the PB1 domain; that stretch reads IGYVKVSMDG…SCKRLRIVKR (86 aa).

Belongs to the Aux/IAA family. Homodimers and heterodimers. Interacts with TPL. Highly expressed in stems and flowers.

It localises to the nucleus. In terms of biological role, aux/IAA proteins are short-lived transcriptional factors that function as repressors of early auxin response genes at low auxin concentrations. Repression is thought to result from the interaction with auxin response factors (ARFs), proteins that bind to the auxin-responsive promoter element (AuxRE). Formation of heterodimers with ARF proteins may alter their ability to modulate early auxin response genes expression. This is Auxin-responsive protein IAA6 (IAA6) from Arabidopsis thaliana (Mouse-ear cress).